The following is a 248-amino-acid chain: Aspartate/glutamate leucyltransferase (248 aa).

This sequence belongs to the R-transferase family. Bpt subfamily.

It localises to the cytoplasm. The catalysed reaction is N-terminal L-glutamyl-[protein] + L-leucyl-tRNA(Leu) = N-terminal L-leucyl-L-glutamyl-[protein] + tRNA(Leu) + H(+). The enzyme catalyses N-terminal L-aspartyl-[protein] + L-leucyl-tRNA(Leu) = N-terminal L-leucyl-L-aspartyl-[protein] + tRNA(Leu) + H(+). Functions in the N-end rule pathway of protein degradation where it conjugates Leu from its aminoacyl-tRNA to the N-termini of proteins containing an N-terminal aspartate or glutamate. The sequence is that of Aspartate/glutamate leucyltransferase from Methylobacterium nodulans (strain LMG 21967 / CNCM I-2342 / ORS 2060).